Here is a 428-residue protein sequence, read N- to C-terminus: RF4 protein (428 aa).

3 N-linked (GlcNAc...) asparagine glycosylation sites follow: N8, N205, and N344.

Functionally, not known. This chain is RF4 protein (RF4), found in Kluyveromyces lactis (strain ATCC 8585 / CBS 2359 / DSM 70799 / NBRC 1267 / NRRL Y-1140 / WM37) (Yeast).